Consider the following 192-residue polypeptide: Beta-glucosidase (192 aa).

Belongs to the glycosyl hydrolase 3 family.

It catalyses the reaction Hydrolysis of terminal, non-reducing beta-D-glucosyl residues with release of beta-D-glucose.. It participates in glycan metabolism; cellulose degradation. In Schizophyllum commune (Split gill fungus), this protein is Beta-glucosidase.